A 372-amino-acid polypeptide reads, in one-letter code: Alanine racemase (372 aa).

Catalysis depends on Lys48, which acts as the Proton acceptor; specific for D-alanine. Lys48 carries the post-translational modification N6-(pyridoxal phosphate)lysine. Arg143 contributes to the substrate binding site. Tyr268 functions as the Proton acceptor; specific for L-alanine in the catalytic mechanism. A substrate-binding site is contributed by Met316.

The protein belongs to the alanine racemase family. Pyridoxal 5'-phosphate serves as cofactor.

It catalyses the reaction L-alanine = D-alanine. The protein operates within amino-acid biosynthesis; D-alanine biosynthesis; D-alanine from L-alanine: step 1/1. Catalyzes the interconversion of L-alanine and D-alanine. May also act on other amino acids. The protein is Alanine racemase (alr) of Vibrio vulnificus (strain YJ016).